Consider the following 193-residue polypeptide: Putative protein-glutamate methylesterase/protein-glutamine glutaminase (193 aa).

The CheB-type methylesterase domain occupies 1-179; that stretch reads MNYEAIVIGV…DYVLSLEKIA (179 aa). Active-site residues include S11, H38, and D131.

The protein belongs to the CheB family.

It localises to the cytoplasm. The catalysed reaction is [protein]-L-glutamate 5-O-methyl ester + H2O = L-glutamyl-[protein] + methanol + H(+). It catalyses the reaction L-glutaminyl-[protein] + H2O = L-glutamyl-[protein] + NH4(+). Functionally, may be involved in chemotaxis. The chain is Putative protein-glutamate methylesterase/protein-glutamine glutaminase (cheB2) from Leptospira interrogans serogroup Icterohaemorrhagiae serovar copenhageni (strain Fiocruz L1-130).